The chain runs to 333 residues: COMPASS-like H3K4 histone methylase component WDR5B (333 aa).

8 WD repeats span residues 1–40 (MPSG…KTLE), 41–80 (GHTA…LIHR), 83–122 (GHSS…ECLK), 126–167 (GHTN…RMIK), 169–207 (HSMP…CLKT), 211–252 (DKSP…KVYT), 253–295 (GHTN…ILQR), and 298–333 (GHTD…KQDA).

Unlike WDR5A, does not interact with RBL or TRO.

The chain is COMPASS-like H3K4 histone methylase component WDR5B from Arabidopsis thaliana (Mouse-ear cress).